The following is a 469-amino-acid chain: Diacetylchitobiose binding protein NgcE (469 aa).

A signal peptide (tat-type signal) is located at residues 1-37 (MTIRAGSLDRRTLLRGAIATAAMGSFAVACSSPSSED). A disordered region spans residues 30–54 (CSSPSSEDKESDSGPKGEKSANNPF). Over residues 35–48 (SEDKESDSGPKGEK) the composition is skewed to basic and acidic residues.

This sequence belongs to the bacterial solute-binding protein 1 family. In terms of assembly, the complex is composed of two ATP-binding proteins (MsiK), two transmembrane proteins (NgcF and NgcG) and a solute-binding protein (NgcE). Predicted to be exported by the Tat system. The position of the signal peptide cleavage has not been experimentally proven.

It localises to the cell membrane. Its function is as follows. Part of the ABC transporter complex NgcEFG-MsiK involved in N,N'-diacetylchitobiose ((GlcNAc)2) uptake. Binds (GlcNAc)2. Can also bind GlcNAc. This chain is Diacetylchitobiose binding protein NgcE, found in Streptomyces coelicolor (strain ATCC BAA-471 / A3(2) / M145).